We begin with the raw amino-acid sequence, 110 residues long: Lichenan-specific phosphotransferase enzyme IIA component (110 aa).

The region spanning 3–101 (EEMEQIIFQI…AAEIIELYEK (99 aa)) is the PTS EIIA type-3 domain. Histidine 77 serves as the catalytic Tele-phosphohistidine intermediate; by HPr.

It is found in the cytoplasm. Functionally, the phosphoenolpyruvate-dependent sugar phosphotransferase system (PTS), a major carbohydrate active -transport system, catalyzes the phosphorylation of incoming sugar substrates concomitant with their translocation across the cell membrane. This system is involved in lichenan transport. The chain is Lichenan-specific phosphotransferase enzyme IIA component (licA) from Bacillus subtilis (strain 168).